Reading from the N-terminus, the 445-residue chain is Argininosuccinate synthase (445 aa).

ATP contacts are provided by residues 17–25 and alanine 43; that span reads AFSGGLDTS. Position 99 (tyrosine 99) interacts with L-citrulline. Residues glycine 129 and threonine 131 each coordinate ATP. Residues threonine 131, asparagine 135, and aspartate 136 each contribute to the L-aspartate site. An L-citrulline-binding site is contributed by asparagine 135. Position 136 (aspartate 136) interacts with ATP. L-citrulline contacts are provided by arginine 139 and serine 192. Aspartate 194 is a binding site for ATP. L-citrulline-binding residues include threonine 201, glutamate 203, and glutamate 280.

It belongs to the argininosuccinate synthase family. Type 2 subfamily. Homotetramer.

It localises to the cytoplasm. The enzyme catalyses L-citrulline + L-aspartate + ATP = 2-(N(omega)-L-arginino)succinate + AMP + diphosphate + H(+). It participates in amino-acid biosynthesis; L-arginine biosynthesis; L-arginine from L-ornithine and carbamoyl phosphate: step 2/3. The sequence is that of Argininosuccinate synthase from Afipia carboxidovorans (strain ATCC 49405 / DSM 1227 / KCTC 32145 / OM5) (Oligotropha carboxidovorans).